The following is a 101-amino-acid chain: MSRRCELTAKGAQVGHKVSHSNIKTKRRFLPNLVNVTFLSDTLGRAVRLRVSTNALKSVDHRGGLDAYLLKAREAELSPKAVELKRAIAKKMAGEPVAAAS.

Belongs to the bacterial ribosomal protein bL28 family.

This chain is Large ribosomal subunit protein bL28, found in Rhodopseudomonas palustris (strain ATCC BAA-98 / CGA009).